We begin with the raw amino-acid sequence, 469 residues long: F-box only protein 3 (469 aa).

An F-box domain is found at 10-56; it reads PLTLESLPTDPLLLILSFLDYRDLINCCYVSRRLSQLSSHDPLWRRH. The ApaG domain occupies 278-408; it reads VATTGDITVS…FHMACPTFRV (131 aa). A compositionally biased stretch (acidic residues) spans 419–449; sequence EYEEMEEEEEEEEEEDDDDSADMDESDDDEE. The segment at 419-454 is disordered; sequence EYEEMEEEEEEEEEEDDDDSADMDESDDDEEERQRR.

Part of a SCF (SKP1-cullin-F-box) protein ligase complex SCF(FBXO3) consisting of FBXO3, SKP1, CUL1 and RBX1. Interacts with PML, interaction is direct and takes place either alone or within the SCF complex.

It localises to the nucleus. It functions in the pathway protein modification; protein ubiquitination. Its function is as follows. Substrate recognition component of the SCF (SKP1-CUL1-F-box protein)-type E3 ubiquitin ligase complex, SCF(FBXO3), which mediates the ubiquitination and subsequent proteasomal degradation of target proteins. Mediates the ubiquitination of HIPK2 and probably that of EP300, leading to rapid degradation by the proteasome. In the presence of PML, HIPK2 ubiquitination still occurs, but degradation is prevented. PML, HIPK2 and FBXO3 may act synergically to activate p53/TP53-dependent transactivation. The SCF(FBXO3) also acts as a regulator of inflammation by mediating ubiquitination and degradation of FBXL2 in response to lipopolysaccharide (LPS). The SCF(FBXO3) complex specifically recognizes FBXL2 phosphorylated at 'Thr-404' and promotes its ubiquitination. This is F-box only protein 3 (FBXO3) from Bos taurus (Bovine).